The sequence spans 417 residues: Serine hydroxymethyltransferase (417 aa).

Residues Leu122 and 126 to 128 (GHL) contribute to the (6S)-5,6,7,8-tetrahydrofolate site. Lys230 carries the N6-(pyridoxal phosphate)lysine modification. Residue 355–357 (SPF) participates in (6S)-5,6,7,8-tetrahydrofolate binding.

The protein belongs to the SHMT family. Homodimer. It depends on pyridoxal 5'-phosphate as a cofactor.

It localises to the cytoplasm. The catalysed reaction is (6R)-5,10-methylene-5,6,7,8-tetrahydrofolate + glycine + H2O = (6S)-5,6,7,8-tetrahydrofolate + L-serine. It functions in the pathway one-carbon metabolism; tetrahydrofolate interconversion. The protein operates within amino-acid biosynthesis; glycine biosynthesis; glycine from L-serine: step 1/1. Catalyzes the reversible interconversion of serine and glycine with tetrahydrofolate (THF) serving as the one-carbon carrier. This reaction serves as the major source of one-carbon groups required for the biosynthesis of purines, thymidylate, methionine, and other important biomolecules. Also exhibits THF-independent aldolase activity toward beta-hydroxyamino acids, producing glycine and aldehydes, via a retro-aldol mechanism. This chain is Serine hydroxymethyltransferase, found in Francisella tularensis subsp. novicida (strain U112).